Consider the following 89-residue polypeptide: Small ribosomal subunit protein uS15 (89 aa).

The protein belongs to the universal ribosomal protein uS15 family. Part of the 30S ribosomal subunit. Forms a bridge to the 50S subunit in the 70S ribosome, contacting the 23S rRNA.

Its function is as follows. One of the primary rRNA binding proteins, it binds directly to 16S rRNA where it helps nucleate assembly of the platform of the 30S subunit by binding and bridging several RNA helices of the 16S rRNA. Functionally, forms an intersubunit bridge (bridge B4) with the 23S rRNA of the 50S subunit in the ribosome. This chain is Small ribosomal subunit protein uS15, found in Nostoc sp. (strain PCC 7120 / SAG 25.82 / UTEX 2576).